A 104-amino-acid chain; its full sequence is Phosphoribosyl-ATP pyrophosphatase (104 aa).

This sequence belongs to the PRA-PH family.

The protein localises to the cytoplasm. The enzyme catalyses 1-(5-phospho-beta-D-ribosyl)-ATP + H2O = 1-(5-phospho-beta-D-ribosyl)-5'-AMP + diphosphate + H(+). It functions in the pathway amino-acid biosynthesis; L-histidine biosynthesis; L-histidine from 5-phospho-alpha-D-ribose 1-diphosphate: step 2/9. This Streptococcus gordonii (strain Challis / ATCC 35105 / BCRC 15272 / CH1 / DL1 / V288) protein is Phosphoribosyl-ATP pyrophosphatase.